The sequence spans 276 residues: NH(3)-dependent NAD(+) synthetase (276 aa).

43-50 (GISGGVDS) lines the ATP pocket. Asp49 lines the Mg(2+) pocket. Arg146 provides a ligand contact to deamido-NAD(+). Thr166 is an ATP binding site. Glu171 is a Mg(2+) binding site. The deamido-NAD(+) site is built by Lys179 and Asp186. Residues Lys195 and Thr217 each contribute to the ATP site. A deamido-NAD(+)-binding site is contributed by 266 to 267 (HK).

Belongs to the NAD synthetase family. Homodimer.

It carries out the reaction deamido-NAD(+) + NH4(+) + ATP = AMP + diphosphate + NAD(+) + H(+). Its pathway is cofactor biosynthesis; NAD(+) biosynthesis; NAD(+) from deamido-NAD(+) (ammonia route): step 1/1. In terms of biological role, catalyzes the ATP-dependent amidation of deamido-NAD to form NAD. Uses ammonia as a nitrogen source. In Shewanella woodyi (strain ATCC 51908 / MS32), this protein is NH(3)-dependent NAD(+) synthetase.